The chain runs to 500 residues: NAD(P)H-quinone oxidoreductase chain 4, chloroplastic (500 aa).

13 helical membrane-spanning segments follow: residues 4-24 (FPWLTIIVVFPIFAGSLIFFL), 35-55 (YTICICILELLLTTYAFCYHF), 87-107 (IGPILLTGFITTLATLAAWPV), 134-154 (LLLFFIMWELELIPVYLLLAM), 167-187 (FILYTAGGSVFLLMGVLGVAL), 208-228 (VLEIIFYIGFFIAFAVKSPII), 242-262 (HYSTCMLLAGILLKMGAYGLI), 272-292 (AHSIFSPWLMIIGTIQIIYAA), 305-325 (IAYPSVSHMGFIIIGISSLTD), 330-350 (GALLQIISHGFIGAALFFLAG), 386-406 (LALPGMSGFVAELIVFFGIIT), 411-431 (LLIPKLLITFVMAIGIILTPI), and 462-482 (LFLSISIFLPVIGIGIYPDFV).

This sequence belongs to the complex I subunit 4 family.

The protein resides in the plastid. It is found in the chloroplast thylakoid membrane. The catalysed reaction is a plastoquinone + NADH + (n+1) H(+)(in) = a plastoquinol + NAD(+) + n H(+)(out). It carries out the reaction a plastoquinone + NADPH + (n+1) H(+)(in) = a plastoquinol + NADP(+) + n H(+)(out). This chain is NAD(P)H-quinone oxidoreductase chain 4, chloroplastic, found in Solanum tuberosum (Potato).